We begin with the raw amino-acid sequence, 131 residues long: Phosphoribosyl-AMP cyclohydrolase (131 aa).

Mg(2+) is bound at residue D89. C90 lines the Zn(2+) pocket. Positions 91 and 93 each coordinate Mg(2+). Positions 106 and 113 each coordinate Zn(2+).

It belongs to the PRA-CH family. Homodimer. Mg(2+) serves as cofactor. The cofactor is Zn(2+).

It is found in the cytoplasm. It carries out the reaction 1-(5-phospho-beta-D-ribosyl)-5'-AMP + H2O = 1-(5-phospho-beta-D-ribosyl)-5-[(5-phospho-beta-D-ribosylamino)methylideneamino]imidazole-4-carboxamide. The protein operates within amino-acid biosynthesis; L-histidine biosynthesis; L-histidine from 5-phospho-alpha-D-ribose 1-diphosphate: step 3/9. In terms of biological role, catalyzes the hydrolysis of the adenine ring of phosphoribosyl-AMP. The protein is Phosphoribosyl-AMP cyclohydrolase of Bifidobacterium longum (strain DJO10A).